Consider the following 194-residue polypeptide: NADH-quinone oxidoreductase subunit B 1 (194 aa).

[4Fe-4S] cluster is bound by residues C47, C48, C113, and C142.

The protein belongs to the complex I 20 kDa subunit family. As to quaternary structure, NDH-1 is composed of 14 different subunits. Subunits NuoB, C, D, E, F, and G constitute the peripheral sector of the complex. Requires [4Fe-4S] cluster as cofactor.

The protein localises to the cell inner membrane. It catalyses the reaction a quinone + NADH + 5 H(+)(in) = a quinol + NAD(+) + 4 H(+)(out). Functionally, NDH-1 shuttles electrons from NADH, via FMN and iron-sulfur (Fe-S) centers, to quinones in the respiratory chain. The immediate electron acceptor for the enzyme in this species is believed to be ubiquinone. Couples the redox reaction to proton translocation (for every two electrons transferred, four hydrogen ions are translocated across the cytoplasmic membrane), and thus conserves the redox energy in a proton gradient. The polypeptide is NADH-quinone oxidoreductase subunit B 1 (Sorangium cellulosum (strain So ce56) (Polyangium cellulosum (strain So ce56))).